Here is a 406-residue protein sequence, read N- to C-terminus: Renin (406 aa).

Residues 1 to 23 (MDGWRRMPRWGLLLLLWGSCTFG) form the signal peptide. Residues 24–66 (LPTDTTTFKRIFLKRMPSIRESLKERGVDMARLGPEWSQPMKR) constitute a propeptide, activation peptide. An N-linked (GlcNAc...) asparagine glycan is attached at Asn71. A Peptidase A1 domain is found at 86–403 (YYGEIGIGTP…DRRNNRIGFA (318 aa)). The active site involves Asp104. Cys117 and Cys124 are joined by a disulfide. Asn141 is a glycosylation site (N-linked (GlcNAc...) asparagine). A disulfide bridge links Cys283 with Cys287. Asp292 is an active-site residue. Cys325 and Cys362 are oxidised to a cystine.

Belongs to the peptidase A1 family. Interacts with ATP6AP2.

The protein localises to the secreted. It localises to the membrane. The catalysed reaction is Cleavage of Leu-|-Xaa bond in angiotensinogen to generate angiotensin I.. Its activity is regulated as follows. Interaction with ATP6AP2 results in a 5-fold increased efficiency in angiotensinogen processing. Functionally, renin is a highly specific endopeptidase, whose only known function is to generate angiotensin I from angiotensinogen in the plasma, initiating a cascade of reactions that produce an elevation of blood pressure and increased sodium retention by the kidney. In Macaca mulatta (Rhesus macaque), this protein is Renin (REN).